We begin with the raw amino-acid sequence, 409 residues long: Divalent metal cation transporter MntH (409 aa).

Helical transmembrane passes span 19 to 39 (LSLM…GNFA), 46 to 66 (ASFG…AMLI), 98 to 118 (WVQA…GAAI), 122 to 142 (LLLG…TFLI), 155 to 175 (LVIG…LVFS), 196 to 216 (AVFL…IYLH), 241 to 261 (IAMT…AAAF), 290 to 310 (IFGL…TLAG), 320 to 340 (FYIP…IVIL), 348 to 368 (ILVM…VPLL), and 388 to 408 (ILGK…LVSL).

This sequence belongs to the NRAMP family.

The protein resides in the cell inner membrane. In terms of biological role, h(+)-stimulated, divalent metal cation uptake system. In Yersinia enterocolitica serotype O:8 / biotype 1B (strain NCTC 13174 / 8081), this protein is Divalent metal cation transporter MntH.